The primary structure comprises 1111 residues: Zinc finger protein GLI1 (1111 aa).

Positions 52–78 (GYGAARETSSCTEGSLFPPPPPPRSSV) are disordered. Residues 123 to 127 (SYGHL) form an interaction with SUFU region. C2H2-type zinc fingers lie at residues 238–263 (TDCR…NSEH), 271–298 (FVCH…MRRH), 304–328 (HKCT…LRSH), 334–359 (YMCE…NRTH), and 365–390 (YVCK…KTVH). The interaction with DNA stretch occupies residues 286–294 (KAQYMLVVH). 2 interaction with DNA regions span residues 348 to 353 (ASDRAK) and 378 to 384 (DPSSLRK). Positions 378–487 (DPSSLRKHVK…EDLSSLDEGP (110 aa)) are disordered. Residues 416 to 431 (EPKREREGGSGREESR) are compositionally biased toward basic and acidic residues. A compositionally biased stretch (polar residues) spans 439-465 (MPQQSPGAQSSCSSDHSPAGSAANTDS). Position 520 is an N6-acetyllysine (lysine 520). Disordered regions lie at residues 528–583 (GAPV…LPGL), 598–649 (ARGS…RAAD), 673–692 (TGRN…QPPS), and 832–891 (PCLN…SSHS). The span at 546-562 (SSSSSMSSAYTVSRRSS) shows a compositional bias: low complexity. Residues 640 to 649 (RASDPARAAD) are compositionally biased toward basic and acidic residues. Over residues 855 to 870 (LPQPQYPQSGPYPQPP) the composition is skewed to pro residues. Lysine 1008 is covalently cross-linked (Glycyl lysine isopeptide (Lys-Gly) (interchain with G-Cter in SUMO2)). The interval 1064 to 1093 (LSPPLSHEQGDSSKNTPSPSGPPNMAVGNM) is disordered.

The protein belongs to the GLI C2H2-type zinc-finger protein family. In terms of assembly, interacts with KIF7. Interacts with STK36. Interacts with ZIC1; the interaction enhances transcription activation. Interacts with SUFU; this inhibits transcriptional activation by GLI1. In terms of processing, phosphorylated in vitro by ULK3. Acetylation at Lys-520 down-regulates transcriptional activity. Deacetylated by HDAC1. Post-translationally, ubiquitinated by the CRL2(FEM1B) complex, suppressing GLI1 transcriptional activator activity.

The protein resides in the cytoplasm. The protein localises to the nucleus. In terms of biological role, acts as a transcriptional activator. Binds to the DNA consensus sequence 5'-GACCACCCA-3'. Regulates the transcription of specific genes during normal development. Plays a role in craniofacial development and digital development, as well as development of the central nervous system and gastrointestinal tract. Mediates SHH signaling. Plays a role in cell proliferation and differentiation via its role in SHH signaling. This is Zinc finger protein GLI1 (Gli1) from Mus musculus (Mouse).